The primary structure comprises 217 residues: Leucyl/phenylalanyl-tRNA--protein transferase (217 aa).

This sequence belongs to the L/F-transferase family.

The protein resides in the cytoplasm. The catalysed reaction is N-terminal L-lysyl-[protein] + L-leucyl-tRNA(Leu) = N-terminal L-leucyl-L-lysyl-[protein] + tRNA(Leu) + H(+). It catalyses the reaction N-terminal L-arginyl-[protein] + L-leucyl-tRNA(Leu) = N-terminal L-leucyl-L-arginyl-[protein] + tRNA(Leu) + H(+). The enzyme catalyses L-phenylalanyl-tRNA(Phe) + an N-terminal L-alpha-aminoacyl-[protein] = an N-terminal L-phenylalanyl-L-alpha-aminoacyl-[protein] + tRNA(Phe). Functions in the N-end rule pathway of protein degradation where it conjugates Leu, Phe and, less efficiently, Met from aminoacyl-tRNAs to the N-termini of proteins containing an N-terminal arginine or lysine. This Caulobacter vibrioides (strain ATCC 19089 / CIP 103742 / CB 15) (Caulobacter crescentus) protein is Leucyl/phenylalanyl-tRNA--protein transferase.